The primary structure comprises 426 residues: MDLQVEKINKISGVIKAPASKSYSHRAFIAAALAEGQSILRDPLYSADTIATLEACEQLGALFQRYPDKCIVQGTAGYIRTPENIIDVKNSGTSVRILSSVAAIAPRANYTIFTGDESLRKRPMQDLIDALENLGVQISSSQSNGTPPIIVKGGFEGGQTDIKGDVSSQFISSIIMAAPYSKKPVTLNVKGTFVSKPYVNMTLSVISKFGIDFEYDTTNIPEYSSYYIEPQKYEATDYTIEGDYSSASYILAAAAMLPSNLTVKNLYKDSMQGDKIIIDIIKKMGAEVTVDDDQIHIESDGNLKAFDINLEDAPDLLPTISILMAQAEGVSKITGVEHARFKETDRVHNCAVELENVGVDVEELQDGLIIKGNPTGGYVDSHMDHRMVMAFYVLGLKIGNIIIKDASCYDISFPNFLEVMHTISEE.

3 residues coordinate 3-phosphoshikimate: Lys-21, Ser-22, and Arg-26. Lys-21 is a binding site for phosphoenolpyruvate. The phosphoenolpyruvate site is built by Gly-92 and Arg-122. 6 residues coordinate 3-phosphoshikimate: Ser-167, Ser-168, Gln-169, Ser-195, Asp-315, and Lys-342. Gln-169 is a binding site for phosphoenolpyruvate. Asp-315 (proton acceptor) is an active-site residue. The phosphoenolpyruvate site is built by Arg-346 and Arg-386.

This sequence belongs to the EPSP synthase family. Monomer.

It localises to the cytoplasm. The enzyme catalyses 3-phosphoshikimate + phosphoenolpyruvate = 5-O-(1-carboxyvinyl)-3-phosphoshikimate + phosphate. It participates in metabolic intermediate biosynthesis; chorismate biosynthesis. In terms of biological role, catalyzes the transfer of the enolpyruvyl moiety of phosphoenolpyruvate (PEP) to the 5-hydroxyl of shikimate-3-phosphate (S3P) to produce enolpyruvyl shikimate-3-phosphate and inorganic phosphate. The chain is 3-phosphoshikimate 1-carboxyvinyltransferase from Methanosphaera stadtmanae (strain ATCC 43021 / DSM 3091 / JCM 11832 / MCB-3).